The primary structure comprises 447 residues: UPF0210 protein LAF_0976 (447 aa).

The protein belongs to the UPF0210 family. In terms of assembly, homodimer.

This Limosilactobacillus fermentum (strain NBRC 3956 / LMG 18251) (Lactobacillus fermentum) protein is UPF0210 protein LAF_0976.